The following is a 291-amino-acid chain: ATP synthase gamma chain (291 aa).

This sequence belongs to the ATPase gamma chain family. F-type ATPases have 2 components, CF(1) - the catalytic core - and CF(0) - the membrane proton channel. CF(1) has five subunits: alpha(3), beta(3), gamma(1), delta(1), epsilon(1). CF(0) has three main subunits: a, b and c.

The protein localises to the cell inner membrane. Its function is as follows. Produces ATP from ADP in the presence of a proton gradient across the membrane. The gamma chain is believed to be important in regulating ATPase activity and the flow of protons through the CF(0) complex. The chain is ATP synthase gamma chain from Burkholderia multivorans (strain ATCC 17616 / 249).